A 349-amino-acid chain; its full sequence is Nicotinate-nucleotide--dimethylbenzimidazole phosphoribosyltransferase (349 aa).

Catalysis depends on E313, which acts as the Proton acceptor.

It belongs to the CobT family.

It carries out the reaction 5,6-dimethylbenzimidazole + nicotinate beta-D-ribonucleotide = alpha-ribazole 5'-phosphate + nicotinate + H(+). It functions in the pathway nucleoside biosynthesis; alpha-ribazole biosynthesis; alpha-ribazole from 5,6-dimethylbenzimidazole: step 1/2. Catalyzes the synthesis of alpha-ribazole-5'-phosphate from nicotinate mononucleotide (NAMN) and 5,6-dimethylbenzimidazole (DMB). In Mycobacterium avium (strain 104), this protein is Nicotinate-nucleotide--dimethylbenzimidazole phosphoribosyltransferase.